The chain runs to 459 residues: 2-(3-amino-3-carboxypropyl)histidine synthase subunit 1 (459 aa).

A disordered region spans residues 1–68 (MEDDRAQVDL…AGANTSIEDS (68 aa)). Positions 41-61 (SAAAGKSSSSSSNSTSQPAGA) are enriched in low complexity. Positions 165, 268, and 403 each coordinate [4Fe-4S] cluster.

The protein belongs to the DPH1/DPH2 family. DPH1 subfamily. As to quaternary structure, component of the 2-(3-amino-3-carboxypropyl)histidine synthase complex composed of dph-1, dph-2, dph-3 and a NADH-dependent reductase, predominantly cbr-1. It depends on [4Fe-4S] cluster as a cofactor.

Its subcellular location is the cytoplasm. It catalyses the reaction L-histidyl-[translation elongation factor 2] + S-adenosyl-L-methionine = 2-[(3S)-amino-3-carboxypropyl]-L-histidyl-[translation elongation factor 2] + S-methyl-5'-thioadenosine + H(+). It functions in the pathway protein modification; peptidyl-diphthamide biosynthesis. Functionally, catalyzes the first step of diphthamide biosynthesis, a post-translational modification of histidine which occurs in elongation factor 2. Dph-1 and dph-2 transfer a 3-amino-3-carboxypropyl (ACP) group from S-adenosyl-L-methionine (SAM) to a histidine residue, the reaction is assisted by a reduction system comprising dph-3 and a NADH-dependent reductase, predominantly cbr-1. In Neurospora crassa (strain ATCC 24698 / 74-OR23-1A / CBS 708.71 / DSM 1257 / FGSC 987), this protein is 2-(3-amino-3-carboxypropyl)histidine synthase subunit 1 (dph-1).